A 337-amino-acid chain; its full sequence is tRNA N6-adenosine threonylcarbamoyltransferase (337 aa).

Fe cation contacts are provided by H111 and H115. Substrate is bound by residues 134 to 138, D167, G180, and N272; that span reads LVSGG. Fe cation is bound at residue D300.

This sequence belongs to the KAE1 / TsaD family. Fe(2+) is required as a cofactor.

The protein resides in the cytoplasm. The catalysed reaction is L-threonylcarbamoyladenylate + adenosine(37) in tRNA = N(6)-L-threonylcarbamoyladenosine(37) in tRNA + AMP + H(+). Required for the formation of a threonylcarbamoyl group on adenosine at position 37 (t(6)A37) in tRNAs that read codons beginning with adenine. Is involved in the transfer of the threonylcarbamoyl moiety of threonylcarbamoyl-AMP (TC-AMP) to the N6 group of A37, together with TsaE and TsaB. TsaD likely plays a direct catalytic role in this reaction. The chain is tRNA N6-adenosine threonylcarbamoyltransferase from Methylococcus capsulatus (strain ATCC 33009 / NCIMB 11132 / Bath).